A 588-amino-acid polypeptide reads, in one-letter code: Nucleoporin ndc-1 (588 aa).

Over residues 1–12 (MMGDSHSSFTTT) the composition is skewed to polar residues. Residues 1–55 (MMGDSHSSFTTTTDEHLYNQFSPGRRKNDFPAASSSSSSPNLRRSPNRTVSSPRV) form a disordered region. Residues 1–79 (MMGDSHSSFT…FQAEISVRKR (79 aa)) are Cytoplasmic-facing. The segment covering 31–48 (PAASSSSSSPNLRRSPNR) has biased composition (low complexity). The chain crosses the membrane as a helical span at residues 80–100 (LAGAACGYLSTIFFIVTVSIL). Residues 101–122 (KLTIWAPFSSVQDSLAWWIYPN) lie on the Perinuclear space side of the membrane. Residues 123-143 (AWASIIFVGIASVAMSLFSII) form a helical membrane-spanning segment. Residues 144–159 (KFCKVDQLPRLAATDT) are Cytoplasmic-facing. A helical membrane pass occupies residues 160 to 180 (FALAGVALEFVTRLTFVYTAF). At 181–190 (CVADFSFSRE) the chain is on the perinuclear space side. A helical transmembrane segment spans residues 191–211 (FAFVAISLAIAISSALVVFRS). The Cytoplasmic segment spans residues 212 to 255 (DYQLNFSHIQVNSVKTLIDFGTSLPYANISEICGIDAAISYTAA). The helical transmembrane segment at 256–276 (VALILVVGPMVSGFSAWWLLL) threads the bilayer. N277 is a topological domain (perinuclear space). A helical membrane pass occupies residues 278-298 (IPFHVVLFGLCFTQQFYSKIS). Topologically, residues 299 to 588 (MKIVNQIVMK…IRMICLTDEL (290 aa)) are cytoplasmic.

Belongs to the NDC1 family.

The protein resides in the nucleus. It localises to the nuclear pore complex. It is found in the nucleus membrane. Functionally, component of the nuclear pore complex (NPC), which plays a key role in de novo assembly and insertion of NPC in the nuclear envelope. Plays a role in postmitotic nuclear pore complex assembly potentially by promoting localization of nuclear pore complex proteins to the nuclear rim. The chain is Nucleoporin ndc-1 from Caenorhabditis elegans.